The primary structure comprises 314 residues: uncharacterized protein (314 aa).

The segment at 39–146 (QENVDSDSTD…SDYSSDESNS (108 aa)) is disordered. The span at 56–76 (STKNVSRNIPKNIPKSISKNI) shows a compositional bias: polar residues. The span at 88-131 (IPKNVSKNIPKNVPKNVSKNIPKNIPKNVPNKSRNKYSNYSEDS) shows a compositional bias: low complexity. Residues 132 to 141 (NYSEDSDYSS) are compositionally biased toward acidic residues.

This is an uncharacterized protein from Acanthamoeba polyphaga mimivirus (APMV).